A 246-amino-acid polypeptide reads, in one-letter code: Small ribosomal subunit protein uS2 (246 aa).

Belongs to the universal ribosomal protein uS2 family.

This Dictyoglomus thermophilum (strain ATCC 35947 / DSM 3960 / H-6-12) protein is Small ribosomal subunit protein uS2.